A 101-amino-acid chain; its full sequence is Acylphosphatase (101 aa).

Positions arginine 15–tyrosine 101 constitute an Acylphosphatase-like domain. Residues arginine 30 and asparagine 48 contribute to the active site.

The protein belongs to the acylphosphatase family.

The enzyme catalyses an acyl phosphate + H2O = a carboxylate + phosphate + H(+). In Saccharolobus solfataricus (strain ATCC 35092 / DSM 1617 / JCM 11322 / P2) (Sulfolobus solfataricus), this protein is Acylphosphatase (acyP).